The sequence spans 223 residues: Cytotoxic T-lymphocyte protein 4 (223 aa).

Residues 1 to 35 form the signal peptide; the sequence is MACLGLRRYKAQLQLPSRTWPFVALLTLLFIPVFS. The Ig-like V-type domain maps to 36-145; it reads EAIQVTQPSV…PPPYFVGMGN (110 aa). Topologically, residues 36–161 are extracellular; the sequence is EAIQVTQPSV…IDPEPCPDSD (126 aa). Positions 46-50 are homodimerization; sequence VLASS. 2 disulfide bridges follow: C58/C129 and C85/C103. N108 and N113 each carry an N-linked (GlcNAc...) asparagine glycan. An important for interaction with CD80 and CD86 region spans residues 134-139; sequence MYPPPY. N145 is a glycosylation site (N-linked (GlcNAc...) asparagine). The segment at 150 to 155 is homodimerization; it reads YVIDPE. Residues 162 to 182 traverse the membrane as a helical segment; sequence FLLWILVAVSLGLFFYSFLVS. The Cytoplasmic segment spans residues 183–223; sequence AVSLSKMLKKRSPLTTGVYVKMPPTEPECEKQFQPYFIPIN. A Phosphotyrosine; by TXK and JAK2 modification is found at Y201.

In terms of assembly, homodimer; disulfide-linked. Binds to CD80/B7-1 and CD86/B7.2. Interacts with ICOSLG. N-glycosylation is important for dimerization. Post-translationally, phosphorylation at Tyr-201 prevents binding to the AP-2 adapter complex, blocks endocytosis, and leads to retention of CTLA4 on the cell surface. As to expression, widely expressed with highest levels in lymphoid tissues.

It is found in the cell membrane. Inhibitory receptor acting as a major negative regulator of T-cell responses. The affinity of CTLA4 for its natural B7 family ligands, CD80 and CD86, is considerably stronger than the affinity of their cognate stimulatory coreceptor CD28. The polypeptide is Cytotoxic T-lymphocyte protein 4 (Ctla4) (Mus musculus (Mouse)).